Reading from the N-terminus, the 1182-residue chain is DNA-directed RNA polymerase subunit beta (1182 aa).

It belongs to the RNA polymerase beta chain family. As to quaternary structure, the RNAP catalytic core consists of 2 alpha, 1 beta, 1 beta' and 1 omega subunit. When a sigma factor is associated with the core the holoenzyme is formed, which can initiate transcription.

The catalysed reaction is RNA(n) + a ribonucleoside 5'-triphosphate = RNA(n+1) + diphosphate. Its function is as follows. DNA-dependent RNA polymerase catalyzes the transcription of DNA into RNA using the four ribonucleoside triphosphates as substrates. The polypeptide is DNA-directed RNA polymerase subunit beta (Fervidobacterium nodosum (strain ATCC 35602 / DSM 5306 / Rt17-B1)).